Here is a 105-residue protein sequence, read N- to C-terminus: Protein AlbB (105 aa).

Involved in the biosynthesis of albonoursin (cyclo[(alpha,beta-dehydro-Phe)-(alpha,beta-dehydro-Leu)]), an antibacterial peptide. AlbB is essential for cyclic dipeptide oxidase AlbA (CDO) activity. The chain is Protein AlbB (albB) from Streptomyces noursei (Streptomyces albulus).